The chain runs to 569 residues: Probable santalene synthase (569 aa).

The (2E)-geranyl diphosphate site is built by Arg-284, Asp-321, Asp-325, Arg-460, and Asn-463. Mg(2+)-binding residues include Asp-321 and Asp-325. Positions 321–325 (DDAYD) match the DDXXD motif motif. Mg(2+) is bound by residues Asn-463, Thr-467, and Glu-471.

The protein belongs to the terpene synthase family. Tpsb subfamily. The cofactor is Mg(2+). Mn(2+) serves as cofactor.

Catalyzes the formation of santalene. The chain is Probable santalene synthase (SSY) from Santalum murrayanum (Bitter quandong).